The chain runs to 601 residues: MLIARNFILMSKSLAWSQASLQPWIHDAIDSLGFRSMTPVQASTIPLFCGNKDVVVEAVTGSGKTLAFAIPVLERVTKCMKENRGSSGLYGIVISPTRELANQINTVFHTLLQFYPEDQPPIKTQLIVGSLATVREDLNAFAENKPQIIIATPGRLLDFFSSNAVKRSTVEMVVLDEADRLLDISFQNDVVSILKKLPKQRRTGLFSATLSSAGDSIFRTGMSNPVKISVNSNKAESKPQSLTVNYMMVNPETKIAVLINMLSTLQYKKCIVYFPTCASVKYFYSVFQKLHPLEDVNLTSIHGQLLAKARLKAMNKFTEGDVRTSKHVLLTTDVAARGIDIPEVDLVIQLDPPTDPDMFLHRCGRTGRANKVGRAIVMLNNNALESDYVDFMEVKGLKMSEVESPDVIDAYKAFSKNLRNLMLQDRAFHETAIKAYVGFVRYYSKHAATSIFRLQTLDYIGLAKAYGLLRLPKMPESRFVPNDRMPEDGWLGEKIDMNKYAYADPAKEKIRLETMEEEWNKKVNDAKRRKELKVKNEAWSSKNEKKEGKQERREKMKRKREAIEKQIMNESSDEETVVDWKDLVREKKQKTSGISGSFDDL.

Residues 14–42 (LAWSQASLQPWIHDAIDSLGFRSMTPVQA) carry the Q motif motif. In terms of domain architecture, Helicase ATP-binding spans 45 to 228 (IPLFCGNKDV…RTGMSNPVKI (184 aa)). An ATP-binding site is contributed by 58–65 (AVTGSGKT). A DEAD box motif is present at residues 176 to 179 (DEAD). Positions 257–419 (VLINMLSTLQ…AYKAFSKNLR (163 aa)) constitute a Helicase C-terminal domain. Residues 507-575 (KEKIRLETME…QIMNESSDEE (69 aa)) are a coiled coil. Basic and acidic residues predominate over residues 532-554 (LKVKNEAWSSKNEKKEGKQERRE). A disordered region spans residues 532-576 (LKVKNEAWSSKNEKKEGKQERREKMKRKREAIEKQIMNESSDEET).

The protein belongs to the DEAD box helicase family. DDX55/SPB4 subfamily. Component of pre-60S ribosomal complexes.

It is found in the nucleus. The protein localises to the nucleolus. It catalyses the reaction ATP + H2O = ADP + phosphate + H(+). Functionally, ATP-binding RNA helicase involved in the biogenesis of 60S ribosomal subunits. Binds 90S pre-ribosomal particles and dissociates from pre-60S ribosomal particles after processing of 27SB pre-rRNA. Required for the normal formation of 18S rRNA through the processing of pre-rRNAs at sites A0, A1 and A2, and the normal formation of 25S and 5.8S rRNAs through the processing of pre-rRNAs at sites C1 and C2. The sequence is that of ATP-dependent rRNA helicase SPB4 from Meyerozyma guilliermondii (strain ATCC 6260 / CBS 566 / DSM 6381 / JCM 1539 / NBRC 10279 / NRRL Y-324) (Yeast).